The chain runs to 489 residues: UDP-N-acetylmuramoylalanine--D-glutamate ligase (489 aa).

126 to 132 (GTNGKTT) provides a ligand contact to ATP.

It belongs to the MurCDEF family.

The protein localises to the cytoplasm. It carries out the reaction UDP-N-acetyl-alpha-D-muramoyl-L-alanine + D-glutamate + ATP = UDP-N-acetyl-alpha-D-muramoyl-L-alanyl-D-glutamate + ADP + phosphate + H(+). Its pathway is cell wall biogenesis; peptidoglycan biosynthesis. In terms of biological role, cell wall formation. Catalyzes the addition of glutamate to the nucleotide precursor UDP-N-acetylmuramoyl-L-alanine (UMA). In Mycobacterium avium (strain 104), this protein is UDP-N-acetylmuramoylalanine--D-glutamate ligase.